We begin with the raw amino-acid sequence, 240 residues long: 31 kDa outer-membrane immunogenic protein (240 aa).

The N-terminal stretch at 1-19 (MKSVILASIAAMFATSAMA) is a signal peptide. The epitope recognized by the monoclonal antibody A59/10F09/G10 stretch occupies residues 48-83 (NAGYAGGKFKHPFSSFDKEDNEQVSGSLDVTAGGFV).

The protein belongs to the Omp25/RopB family. In terms of assembly, oligomeric.

The protein localises to the cell outer membrane. Major outer membrane protein associated with peptidoglycans. May function as a porin. The protein is 31 kDa outer-membrane immunogenic protein (omp31) of Brucella melitensis biotype 1 (strain ATCC 23456 / CCUG 17765 / NCTC 10094 / 16M).